The primary structure comprises 319 residues: ATP-dependent 6-phosphofructokinase (319 aa).

G11 provides a ligand contact to ATP. 21–25 (RAVVR) serves as a coordination point for ADP. ATP contacts are provided by residues 72–73 (RC) and 102–105 (GDGS). Residue D103 coordinates Mg(2+). 125–127 (TID) lines the substrate pocket. The active-site Proton acceptor is the D127. ADP is bound at residue R154. 169 to 171 (MGR) serves as a coordination point for substrate. ADP is bound by residues 185 to 187 (GAE), R211, and 213 to 215 (KKH). Substrate contacts are provided by residues E222, R243, and 249 to 252 (HIQR).

Belongs to the phosphofructokinase type A (PFKA) family. ATP-dependent PFK group I subfamily. Prokaryotic clade 'B1' sub-subfamily. As to quaternary structure, homotetramer. The cofactor is Mg(2+).

It is found in the cytoplasm. The enzyme catalyses beta-D-fructose 6-phosphate + ATP = beta-D-fructose 1,6-bisphosphate + ADP + H(+). Its pathway is carbohydrate degradation; glycolysis; D-glyceraldehyde 3-phosphate and glycerone phosphate from D-glucose: step 3/4. Its activity is regulated as follows. Allosterically activated by ADP and other diphosphonucleosides, and allosterically inhibited by phosphoenolpyruvate. Its function is as follows. Catalyzes the phosphorylation of D-fructose 6-phosphate to fructose 1,6-bisphosphate by ATP, the first committing step of glycolysis. This chain is ATP-dependent 6-phosphofructokinase, found in Lysinibacillus sphaericus (Bacillus sphaericus).